Consider the following 74-residue polypeptide: Putative membrane protein insertion efficiency factor (74 aa).

The protein belongs to the UPF0161 family.

Its subcellular location is the cell membrane. Its function is as follows. Could be involved in insertion of integral membrane proteins into the membrane. The chain is Putative membrane protein insertion efficiency factor from Bacillus pumilus (strain SAFR-032).